The chain runs to 503 residues: uncharacterized protein (503 aa).

Residues 26–46 traverse the membrane as a helical segment; the sequence is ILFLLLGLIILVNISINVATA. Disordered regions lie at residues 155–176, 311–381, 436–456, and 472–503; these read RPLSRGYPPFRKQPQGHKMSQM, YDAR…ESHE, QISDPTPPPTTFVPLSRNPGG, and VQENRGRASSLPPPSTSASRPSLHRSRTGKLN. 2 stretches are compositionally biased toward basic and acidic residues: residues 311–322 and 334–346; these read YDARDQWRRGTE and NPREVQGYRDHNS. Positions 348–367 are enriched in polar residues; that stretch reads AHRQNFSSHTHSQPNHSPPQ. A compositionally biased stretch (basic residues) spans 493–503; sequence SLHRSRTGKLN.

The protein localises to the membrane. This is an uncharacterized protein from Mus musculus (Mouse).